Here is a 95-residue protein sequence, read N- to C-terminus: Aspartyl/glutamyl-tRNA(Asn/Gln) amidotransferase subunit C (95 aa).

It belongs to the GatC family. In terms of assembly, heterotrimer of A, B and C subunits.

It catalyses the reaction L-glutamyl-tRNA(Gln) + L-glutamine + ATP + H2O = L-glutaminyl-tRNA(Gln) + L-glutamate + ADP + phosphate + H(+). The enzyme catalyses L-aspartyl-tRNA(Asn) + L-glutamine + ATP + H2O = L-asparaginyl-tRNA(Asn) + L-glutamate + ADP + phosphate + 2 H(+). Its function is as follows. Allows the formation of correctly charged Asn-tRNA(Asn) or Gln-tRNA(Gln) through the transamidation of misacylated Asp-tRNA(Asn) or Glu-tRNA(Gln) in organisms which lack either or both of asparaginyl-tRNA or glutaminyl-tRNA synthetases. The reaction takes place in the presence of glutamine and ATP through an activated phospho-Asp-tRNA(Asn) or phospho-Glu-tRNA(Gln). The protein is Aspartyl/glutamyl-tRNA(Asn/Gln) amidotransferase subunit C of Pelodictyon phaeoclathratiforme (strain DSM 5477 / BU-1).